The following is a 238-amino-acid chain: ATP synthase subunit a (238 aa).

The next 6 helical transmembrane spans lie at 18 to 38 (TTNL…VFAL), 76 to 96 (FGLY…IGLF), 114 to 134 (PIVT…SGVA), 150 to 170 (FKVW…TLGL), 188 to 208 (GIAF…ALIW), and 211 to 231 (FSVF…SVYI).

The protein belongs to the ATPase A chain family. F-type ATPases have 2 components, CF(1) - the catalytic core - and CF(0) - the membrane proton channel. CF(1) has five subunits: alpha(3), beta(3), gamma(1), delta(1), epsilon(1). CF(0) has three main subunits: a(1), b(2) and c(9-12). The alpha and beta chains form an alternating ring which encloses part of the gamma chain. CF(1) is attached to CF(0) by a central stalk formed by the gamma and epsilon chains, while a peripheral stalk is formed by the delta and b chains.

It localises to the cell membrane. Its function is as follows. Key component of the proton channel; it plays a direct role in the translocation of protons across the membrane. In Pediococcus pentosaceus (strain ATCC 25745 / CCUG 21536 / LMG 10740 / 183-1w), this protein is ATP synthase subunit a.